The sequence spans 351 residues: Methylthioribose-1-phosphate isomerase (351 aa).

Residues 55 to 57 (RGA), Arg-95, and Gln-202 contribute to the substrate site. Asp-243 functions as the Proton donor in the catalytic mechanism. Substrate is bound at residue 253–254 (NK).

This sequence belongs to the eIF-2B alpha/beta/delta subunits family. MtnA subfamily.

It catalyses the reaction 5-(methylsulfanyl)-alpha-D-ribose 1-phosphate = 5-(methylsulfanyl)-D-ribulose 1-phosphate. The protein operates within amino-acid biosynthesis; L-methionine biosynthesis via salvage pathway; L-methionine from S-methyl-5-thio-alpha-D-ribose 1-phosphate: step 1/6. In terms of biological role, catalyzes the interconversion of methylthioribose-1-phosphate (MTR-1-P) into methylthioribulose-1-phosphate (MTRu-1-P). The sequence is that of Methylthioribose-1-phosphate isomerase from Marinobacter nauticus (strain ATCC 700491 / DSM 11845 / VT8) (Marinobacter aquaeolei).